Reading from the N-terminus, the 245-residue chain is Probable membrane transporter protein YdhB (245 aa).

The next 8 membrane-spanning stretches (helical) occupy residues 1-21, 34-56, 71-91, 98-118, 137-157, 177-197, 199-219, and 225-245; these read MLII…GAGG, HIPI…LSGA, LIVG…TSFI, YLTA…LFIL, ILGI…APFI, MLVI…EGFV, YVLL…GAKF, and KVVL…LLLF.

Belongs to the 4-toluene sulfonate uptake permease (TSUP) (TC 2.A.102) family.

Its subcellular location is the cell membrane. This chain is Probable membrane transporter protein YdhB (ydhB), found in Bacillus subtilis (strain 168).